We begin with the raw amino-acid sequence, 151 residues long: Mini-ribonuclease 3 (151 aa).

Aspartate 30 is a catalytic residue.

This sequence belongs to the MrnC RNase family. As to quaternary structure, homodimer. It depends on Mg(2+) as a cofactor.

The protein localises to the cytoplasm. Involved in correct processing of both the 5' and 3' ends of 23S rRNA precursor. Processes 30S rRNA precursor transcript even in absence of ribonuclease 3 (Rnc); Rnc processes 30S rRNA into smaller rRNA precursors. The polypeptide is Mini-ribonuclease 3 (Thermosynechococcus vestitus (strain NIES-2133 / IAM M-273 / BP-1)).